The primary structure comprises 156 residues: ATP synthase subunit b (156 aa).

Residues 7–27 (LFAQMIVFFVLWWVVARFVWP) form a helical membrane-spanning segment.

Belongs to the ATPase B chain family. F-type ATPases have 2 components, F(1) - the catalytic core - and F(0) - the membrane proton channel. F(1) has five subunits: alpha(3), beta(3), gamma(1), delta(1), epsilon(1). F(0) has three main subunits: a(1), b(2) and c(10-14). The alpha and beta chains form an alternating ring which encloses part of the gamma chain. F(1) is attached to F(0) by a central stalk formed by the gamma and epsilon chains, while a peripheral stalk is formed by the delta and b chains.

Its subcellular location is the cell inner membrane. In terms of biological role, f(1)F(0) ATP synthase produces ATP from ADP in the presence of a proton or sodium gradient. F-type ATPases consist of two structural domains, F(1) containing the extramembraneous catalytic core and F(0) containing the membrane proton channel, linked together by a central stalk and a peripheral stalk. During catalysis, ATP synthesis in the catalytic domain of F(1) is coupled via a rotary mechanism of the central stalk subunits to proton translocation. Functionally, component of the F(0) channel, it forms part of the peripheral stalk, linking F(1) to F(0). The protein is ATP synthase subunit b of Polynucleobacter necessarius subsp. necessarius (strain STIR1).